The sequence spans 635 residues: Glutamyl-tRNA(Gln) amidotransferase subunit E (635 aa).

Residues 415 to 437 form a disordered region; sequence LPDGNTEYMRPLPGKARMYPETD.

It belongs to the GatB/GatE family. GatE subfamily. Heterodimer of GatD and GatE.

It catalyses the reaction L-glutamyl-tRNA(Gln) + L-glutamine + ATP + H2O = L-glutaminyl-tRNA(Gln) + L-glutamate + ADP + phosphate + H(+). Functionally, allows the formation of correctly charged Gln-tRNA(Gln) through the transamidation of misacylated Glu-tRNA(Gln) in organisms which lack glutaminyl-tRNA synthetase. The reaction takes place in the presence of glutamine and ATP through an activated gamma-phospho-Glu-tRNA(Gln). The GatDE system is specific for glutamate and does not act on aspartate. This chain is Glutamyl-tRNA(Gln) amidotransferase subunit E, found in Pyrococcus horikoshii (strain ATCC 700860 / DSM 12428 / JCM 9974 / NBRC 100139 / OT-3).